Here is a 210-residue protein sequence, read N- to C-terminus: Putative truncated L-serine dehydratase SDL1 (210 aa).

It belongs to the serine/threonine dehydratase family. It depends on pyridoxal 5'-phosphate as a cofactor.

It localises to the cytoplasm. It carries out the reaction L-serine = pyruvate + NH4(+). It participates in carbohydrate biosynthesis; gluconeogenesis. The chain is Putative truncated L-serine dehydratase SDL1 (SDL1) from Saccharomyces cerevisiae (strain ATCC 204508 / S288c) (Baker's yeast).